A 486-amino-acid chain; its full sequence is Ribulose bisphosphate carboxylase large chain (486 aa).

The substrate site is built by Asn-125 and Thr-175. Catalysis depends on Lys-177, which acts as the Proton acceptor. Position 179 (Lys-179) interacts with substrate. Residues Lys-203, Asp-205, and Glu-206 each coordinate Mg(2+). Lys-203 is subject to N6-carboxylysine. Residue His-295 is the Proton acceptor of the active site. 3 residues coordinate substrate: Arg-296, His-328, and Ser-380.

This sequence belongs to the RuBisCO large chain family. Type I subfamily. As to quaternary structure, heterohexadecamer of 8 large chains and 8 small chains. Mg(2+) serves as cofactor.

It catalyses the reaction 2 (2R)-3-phosphoglycerate + 2 H(+) = D-ribulose 1,5-bisphosphate + CO2 + H2O. The enzyme catalyses D-ribulose 1,5-bisphosphate + O2 = 2-phosphoglycolate + (2R)-3-phosphoglycerate + 2 H(+). Functionally, ruBisCO catalyzes two reactions: the carboxylation of D-ribulose 1,5-bisphosphate, the primary event in carbon dioxide fixation, as well as the oxidative fragmentation of the pentose substrate. Both reactions occur simultaneously and in competition at the same active site. The protein is Ribulose bisphosphate carboxylase large chain of Aurantimonas manganoxydans (strain ATCC BAA-1229 / DSM 21871 / SI85-9A1).